Here is a 171-residue protein sequence, read N- to C-terminus: Phosphopantetheine adenylyltransferase (171 aa).

Threonine 9 lines the substrate pocket. Residues 9–10 (TF) and histidine 17 contribute to the ATP site. Residues lysine 41, leucine 73, and arginine 87 each coordinate substrate. ATP-binding positions include 88–90 (GLR), glutamate 98, and 123–129 (YQFISGT).

The protein belongs to the bacterial CoaD family. In terms of assembly, homohexamer. Mg(2+) serves as cofactor.

It is found in the cytoplasm. The enzyme catalyses (R)-4'-phosphopantetheine + ATP + H(+) = 3'-dephospho-CoA + diphosphate. The protein operates within cofactor biosynthesis; coenzyme A biosynthesis; CoA from (R)-pantothenate: step 4/5. In terms of biological role, reversibly transfers an adenylyl group from ATP to 4'-phosphopantetheine, yielding dephospho-CoA (dPCoA) and pyrophosphate. The polypeptide is Phosphopantetheine adenylyltransferase (Paraburkholderia phytofirmans (strain DSM 17436 / LMG 22146 / PsJN) (Burkholderia phytofirmans)).